Reading from the N-terminus, the 422-residue chain is Cytokine receptor-like factor 1 (422 aa).

Residues 1-37 form the signal peptide; that stretch reads MPAGRRGPAAQSARRPPPLLPLLLLLCVLGAPRAGSG. An Ig-like C2-type domain is found at 38 to 131; it reads AHTAVISPQD…SILAGSCLYV (94 aa). Residues N92, N104, and N140 are each glycosylated (N-linked (GlcNAc...) asparagine). Fibronectin type-III domains follow at residues 137 to 232 and 237 to 341; these read KPVN…ILDV and PPPD…TPRS. A disulfide bond links C143 and C153. The N-linked (GlcNAc...) asparagine glycan is linked to N168. C184 and C195 form a disulfide bridge. A Phosphoserine modification is found at S219. N292 carries N-linked (GlcNAc...) asparagine glycosylation. The WSXWS motif motif lies at 327–331; the sequence is WSEWS. The interval 332–363 is disordered; it reads HPTAASTPRSERPGPGGGACEPRGGEPSSGPV. The N-linked (GlcNAc...) asparagine glycan is linked to N382. The interval 399 to 422 is disordered; the sequence is HKTRNQDEGILPSGRRGTARGPAR.

Belongs to the type I cytokine receptor family. Type 3 subfamily. In terms of assembly, forms covalent di- and tetramers. Forms a heteromeric complex with cardiotrophin-like cytokine CLCF1/CLC; the CRLF1-CLCF1 complex is a ligand for the ciliary neurotrophic factor receptor/CNTFR. The CRLF1-CLCF1 heterodimer binds SORL1 (via N-terminal ectodomain); within this complex, the interaction is mediated predominantly by the CRLF1 moiety. The tripartite signaling complex formed by CRLF1, CLCF1 and CNTFR also binds SORL1. Highest levels of expression observed in spleen, thymus, lymph node, appendix, bone marrow, stomach, placenta, heart, thyroid and ovary. Strongly expressed also in fetal lung.

It localises to the secreted. In complex with CLCF1, forms a heterodimeric neurotropic cytokine that plays a crucial role during neuronal development. May also play a regulatory role in the immune system. The sequence is that of Cytokine receptor-like factor 1 (CRLF1) from Homo sapiens (Human).